Reading from the N-terminus, the 336-residue chain is F-box protein At5g50450 (336 aa).

The F-box domain maps to 19–70; it reads NNHFEDLHDDLIISILRKLATSASSPSDFLTVLSTCKRLNRLGLHPLVLSKA. 8 residues coordinate Zn(2+): histidine 263, cysteine 266, cysteine 279, cysteine 282, cysteine 288, cysteine 292, histidine 301, and cysteine 305. An MYND-type; atypical zinc finger spans residues 263-305; the sequence is HGGCGRPETRAHEFRRCSVCGKVNYCSRGCQALDWRAKHKVEC.

The polypeptide is F-box protein At5g50450 (Arabidopsis thaliana (Mouse-ear cress)).